Reading from the N-terminus, the 603-residue chain is MAASSTNARLTNPPRLLSKPRLSPTSVANLRFPAADFSTRFFADSSSPRLRSVPFPVVFSDQRRRRSMEPSNVYVASNSTEMEIGSHDIVKNPSLICAPVMADSIDKMVIETSKAHELGADLVEIRLDWLKDFNPLEDLKTIIKKSPLPTLFTYRPKWEGGQYEGDENERRDVLRLAMELGADYIDVELQVASEFIKSIDGKKPGKFKVIVSSHNYQNTPSVEDLDGLVARIQQTGADIVKIATTAVDIADVARMFHITSKAQVPTIGLVMGERGLMSRILCSKFGGYLTFGTLDSSKVSAPGQPTIKDLLDLYNFRRIGPDTKVYGIIGKPVSHSKSPIVHNQAFKSVDFNGVYVHLLVDNLVSFLQAYSSSDFAGFSCTIPHKEAALQCCDEVDPLAKSIGAVNTILRRKSDGKLLGYNTDCIGSISAIEDGLRSSGDPSSVPSSSSPLASKTVVVIGAGGAGKALAYGAKEKGAKVVIANRTYERALELAEAIGGKALSLTDLDNYHPEDGMVLANTTSMGMQPNVEETPISKDALKHYALVFDAVYTPRITRLLREAEESGAITVSGSEMFVRQAYEQFEIFTGLPAPKELYWQIMSKY.

The span at 1-10 (MAASSTNARL) shows a compositional bias: polar residues. The disordered stretch occupies residues 1–22 (MAASSTNARLTNPPRLLSKPRL). Residues 1 to 66 (MAASSTNARL…VVFSDQRRRR (66 aa)) constitute a chloroplast transit peptide. Over residues 13–22 (PPRLLSKPRL) the composition is skewed to low complexity. A 3-dehydroquinate dehydratase region spans residues 96 to 313 (ICAPVMADSI…QPTIKDLLDL (218 aa)). 3-dehydroshikimate is bound by residues glutamate 124, arginine 126, and arginine 155. The active-site Proton acceptor; for 3-dehydroquinate dehydratase activity is histidine 214. Lysine 241, arginine 279, serine 300, and glutamine 304 together coordinate 3-dehydroshikimate. Lysine 241 functions as the Schiff-base intermediate with substrate; for 3-dehydroquinate dehydratase activity in the catalytic mechanism. The tract at residues 328–558 (IIGKPVSHSK…VYTPRITRLL (231 aa)) is shikimate dehydrogenase. Serine 336, serine 338, threonine 381, lysine 385, asparagine 406, and aspartate 423 together coordinate shikimate. The active-site For shikimate dehydrogenase activity is the lysine 385. The active-site For shikimate dehydrogenase activity is aspartate 423. 8 residues coordinate NADP(+): alanine 461, glycine 463, alanine 464, asparagine 483, threonine 485, arginine 488, methionine 525, and alanine 548. Tyrosine 550 provides a ligand contact to shikimate. Glycine 571 contributes to the NADP(+) binding site. Residues glutamine 578 and glutamine 582 each contribute to the shikimate site.

This sequence in the N-terminal section; belongs to the type-I 3-dehydroquinase family. The protein in the C-terminal section; belongs to the shikimate dehydrogenase family. As to quaternary structure, monomer.

Its subcellular location is the plastid. The protein resides in the chloroplast. It carries out the reaction 3-dehydroquinate = 3-dehydroshikimate + H2O. The enzyme catalyses shikimate + NADP(+) = 3-dehydroshikimate + NADPH + H(+). The protein operates within metabolic intermediate biosynthesis; chorismate biosynthesis; chorismate from D-erythrose 4-phosphate and phosphoenolpyruvate: step 3/7. It functions in the pathway metabolic intermediate biosynthesis; chorismate biosynthesis; chorismate from D-erythrose 4-phosphate and phosphoenolpyruvate: step 4/7. Its function is as follows. Bifunctional dehydroquinate dehydratase-shikimate dehydrogenase enzyme that catalyzes two steps in the chorismate biosynthesis pathway. In Arabidopsis thaliana (Mouse-ear cress), this protein is Bifunctional 3-dehydroquinate dehydratase/shikimate dehydrogenase, chloroplastic.